An 807-amino-acid chain; its full sequence is Protein WEAK CHLOROPLAST MOVEMENT UNDER BLUE LIGHT 1 (807 aa).

The interval 1–162 (MEDLKTVEAS…GTPKNVDSHR (162 aa)) is disordered. Positions 31–40 (RESNIQSATK) are enriched in polar residues. Over residues 46-73 (QSQTDTEETQQSQTDTEETQQSQTDDTT) the composition is skewed to low complexity. Polar residues predominate over residues 138-157 (RTVSSPRFSGSPVSTGTPKN). Serine 148 bears the Phosphoserine mark. 4 coiled-coil regions span residues 191–429 (RMQA…ELVA), 457–489 (DLHA…LKLA), 516–621 (IAVA…ALEE), and 664–724 (AAVS…WRAE). Disordered stretches follow at residues 532–565 (IASV…EAKS) and 722–789 (RAEH…KKKK). Basic and acidic residues-rich tracts occupy residues 537 to 548 (SKEKDAREKMVE), 722 to 732 (RAEHEQKRKAG), and 739 to 749 (KNLKESFEGGK). Polar residues predominate over residues 761–781 (SSPSESYGTEENSETNLSPQT).

It belongs to the WEB family. Interacts with PMI2. Ubiquitous but preferentially in chloroplast-containing tissues.

The protein resides in the cytoplasm. Its function is as follows. Required for the chloroplast avoidance response under high intensity blue light. This avoidance response consists in the relocation of chloroplasts on the anticlinal side of exposed cells. Acts in association with PMI2 to maintain the velocity of chloroplast photorelocation movement via cp-actin filaments regulation. The chain is Protein WEAK CHLOROPLAST MOVEMENT UNDER BLUE LIGHT 1 (WEB1) from Arabidopsis thaliana (Mouse-ear cress).